Here is a 470-residue protein sequence, read N- to C-terminus: Aminoacyl transferase sphA (470 aa).

Residues Ser-212, His-244, and Thr-272 each contribute to the pyridoxal 5'-phosphate site. An N6-(pyridoxal phosphate)lysine modification is found at Lys-275.

Belongs to the class-II pyridoxal-phosphate-dependent aminotransferase family. BioF subfamily. In terms of assembly, homodimer. Requires pyridoxal 5'-phosphate as cofactor.

Its pathway is secondary metabolite biosynthesis. Functionally, aminoacyl transferase; part of the gene cluster that mediates the biosynthesis of sphingofungins, bioactive molecules acting as sphingolipid inhibitors via inhibiting serine palmitoyl transferase (SPT). Within the pathway, sphA transfers 2-methyl-aminomalonate and 2-hydroxymethyl-aminomalonate onto the sphB product 3-hydroxyoctadeca-4,10-dienoyl-ACP to produce the precursors of sphingofungins E and F. The substrate specificity of sphA using 2-methyl-aminomalonate and 2-hydroxymethyl-aminomalonate instread of aminomalonate is responsible for the biosynthesis of sphingofungins E and F but not B and C like in Aspergillus fumigatus. The PKS sphB does not contain any putative thioesterase domain for releasing the nascent polyketide chain and it has been suggested that aminoacyl transferases can facilitate the polyketide chain release. The protein is Aminoacyl transferase sphA of Byssochlamys spectabilis (Paecilomyces variotii).